Consider the following 159-residue polypeptide: 6,7-dimethyl-8-ribityllumazine synthase (159 aa).

Residues Phe23, 61-63 (SFE), and 85-87 (AVI) each bind 5-amino-6-(D-ribitylamino)uracil. 90 to 91 (DT) contacts (2S)-2-hydroxy-3-oxobutyl phosphate. Catalysis depends on His93, which acts as the Proton donor. Phe118 contributes to the 5-amino-6-(D-ribitylamino)uracil binding site. Residue Arg132 coordinates (2S)-2-hydroxy-3-oxobutyl phosphate.

This sequence belongs to the DMRL synthase family.

It catalyses the reaction (2S)-2-hydroxy-3-oxobutyl phosphate + 5-amino-6-(D-ribitylamino)uracil = 6,7-dimethyl-8-(1-D-ribityl)lumazine + phosphate + 2 H2O + H(+). The protein operates within cofactor biosynthesis; riboflavin biosynthesis; riboflavin from 2-hydroxy-3-oxobutyl phosphate and 5-amino-6-(D-ribitylamino)uracil: step 1/2. In terms of biological role, catalyzes the formation of 6,7-dimethyl-8-ribityllumazine by condensation of 5-amino-6-(D-ribitylamino)uracil with 3,4-dihydroxy-2-butanone 4-phosphate. This is the penultimate step in the biosynthesis of riboflavin. This chain is 6,7-dimethyl-8-ribityllumazine synthase, found in Synechococcus sp. (strain RCC307).